The following is a 460-amino-acid chain: Bifunctional protein GlmU (460 aa).

The segment at 1–237 (MSSNQYTAGA…DPDLLGVNTP (237 aa)) is pyrophosphorylase. Residues 13 to 16 (LAAG), lysine 27, glutamine 78, and 83 to 84 (GT) each bind UDP-N-acetyl-alpha-D-glucosamine. Position 109 (aspartate 109) interacts with Mg(2+). UDP-N-acetyl-alpha-D-glucosamine-binding residues include glycine 146, glutamate 160, asparagine 177, and asparagine 235. Residue asparagine 235 participates in Mg(2+) binding. The linker stretch occupies residues 238 to 258 (AELMRSEELLRENIVTRHLHN). Positions 259–460 (GVHVHAAGSV…QKNLRKTRHS (202 aa)) are N-acetyltransferase. UDP-N-acetyl-alpha-D-glucosamine is bound by residues arginine 341 and lysine 359. The Proton acceptor role is filled by histidine 371. Residues tyrosine 374 and asparagine 385 each contribute to the UDP-N-acetyl-alpha-D-glucosamine site. Residues alanine 388, 394–395 (NY), serine 413, alanine 431, and arginine 448 each bind acetyl-CoA.

It in the N-terminal section; belongs to the N-acetylglucosamine-1-phosphate uridyltransferase family. The protein in the C-terminal section; belongs to the transferase hexapeptide repeat family. In terms of assembly, homotrimer. Mg(2+) serves as cofactor.

The protein localises to the cytoplasm. It catalyses the reaction alpha-D-glucosamine 1-phosphate + acetyl-CoA = N-acetyl-alpha-D-glucosamine 1-phosphate + CoA + H(+). It carries out the reaction N-acetyl-alpha-D-glucosamine 1-phosphate + UTP + H(+) = UDP-N-acetyl-alpha-D-glucosamine + diphosphate. Its pathway is nucleotide-sugar biosynthesis; UDP-N-acetyl-alpha-D-glucosamine biosynthesis; N-acetyl-alpha-D-glucosamine 1-phosphate from alpha-D-glucosamine 6-phosphate (route II): step 2/2. It participates in nucleotide-sugar biosynthesis; UDP-N-acetyl-alpha-D-glucosamine biosynthesis; UDP-N-acetyl-alpha-D-glucosamine from N-acetyl-alpha-D-glucosamine 1-phosphate: step 1/1. The protein operates within bacterial outer membrane biogenesis; LPS lipid A biosynthesis. Its function is as follows. Catalyzes the last two sequential reactions in the de novo biosynthetic pathway for UDP-N-acetylglucosamine (UDP-GlcNAc). The C-terminal domain catalyzes the transfer of acetyl group from acetyl coenzyme A to glucosamine-1-phosphate (GlcN-1-P) to produce N-acetylglucosamine-1-phosphate (GlcNAc-1-P), which is converted into UDP-GlcNAc by the transfer of uridine 5-monophosphate (from uridine 5-triphosphate), a reaction catalyzed by the N-terminal domain. This Oleidesulfovibrio alaskensis (strain ATCC BAA-1058 / DSM 17464 / G20) (Desulfovibrio alaskensis) protein is Bifunctional protein GlmU.